The primary structure comprises 123 residues: Holo-[acyl-carrier-protein] synthase (123 aa).

2 residues coordinate Mg(2+): D8 and E50.

This sequence belongs to the P-Pant transferase superfamily. AcpS family. The cofactor is Mg(2+).

It localises to the cytoplasm. The catalysed reaction is apo-[ACP] + CoA = holo-[ACP] + adenosine 3',5'-bisphosphate + H(+). In terms of biological role, transfers the 4'-phosphopantetheine moiety from coenzyme A to a Ser of acyl-carrier-protein. The polypeptide is Holo-[acyl-carrier-protein] synthase (Kocuria rhizophila (strain ATCC 9341 / DSM 348 / NBRC 103217 / DC2201)).